A 155-amino-acid chain; its full sequence is Small ribosomal subunit protein uS7 (155 aa).

The protein belongs to the universal ribosomal protein uS7 family. In terms of assembly, part of the 30S ribosomal subunit. Contacts proteins S9 and S11.

In terms of biological role, one of the primary rRNA binding proteins, it binds directly to 16S rRNA where it nucleates assembly of the head domain of the 30S subunit. Is located at the subunit interface close to the decoding center, probably blocks exit of the E-site tRNA. In Mycoplasma capricolum subsp. capricolum (strain California kid / ATCC 27343 / NCTC 10154), this protein is Small ribosomal subunit protein uS7.